Consider the following 391-residue polypeptide: MRKLFLLSILMIGVIVAFAGCVEESKTTTQLQQTTQSESQKAETQPKLGVNVVRYAETFKLYPHWDEGYCVVADSVGNKFVLVEGNAKAPNISDGKIIKVPVKRIVTDFYCPIISAADILNAYHHTIVGAPKYAVEKSPKLKELFDEGKVVDIGSPSKGVNYELIVNLTPDIVFLGDWKSEDVVEEKLKELGVTVSRFYTYQEPTYMGRVEWIKFAAAFWGSNAYKKADKWFENVVKVRENILKKVQNVTNEPTVVIFSWSKTKNMPGIYGNDSYYSKMIAEFKGKNVFDDYNRGYQYVDKETFYERAMNADVVILIWFYGDVKTKEDLLKINPNFAEFKAFKTGRFYVSHPDYYVWEARDPAGYMMDFAKMIHPELFGGDDDLKYYYKIK.

The N-terminal stretch at 1 to 20 (MRKLFLLSILMIGVIVAFAG) is a signal peptide. C21 is lipidated: S-archaeol cysteine. In terms of domain architecture, Fe/B12 periplasmic-binding spans 104 to 377 (RIVTDFYCPI…DFAKMIHPEL (274 aa)).

The protein resides in the cell membrane. This is an uncharacterized protein from Methanocaldococcus jannaschii (strain ATCC 43067 / DSM 2661 / JAL-1 / JCM 10045 / NBRC 100440) (Methanococcus jannaschii).